Consider the following 318-residue polypeptide: DNA repair nuclease/redox regulator APEX1 (318 aa).

Positions 1-33 (MPKRGKKGAVAEDGDELKTEPEAKKSKTAAKKN) are necessary for interaction with YBX1, binding to RNA, association together with NPM1 to rRNA, endoribonuclease activity on abasic RNA and localization in the nucleoli. A disordered region spans residues 1 to 60 (MPKRGKKGAVAEDGDELKTEPEAKKSKTAAKKNDKEAAGEGPALYEDPPDQKTSPSGKPA). N6-acetyllysine; by EP300 is present on residues lysine 6 and lysine 7. The short motif at 8–13 (GAVAED) is the Nuclear localization signal (NLS) element. Residues 16-38 (ELKTEPEAKKSKTAAKKNDKEAA) are compositionally biased toward basic and acidic residues. The interval 23 to 33 (AKKSKTAAKKN) is necessary for interaction with NPM1 and for efficient rRNA binding. Residues lysine 27, lysine 31, lysine 32, and lysine 35 each carry the N6-acetyllysine modification. Phosphoserine is present on serine 54. The Nuclear export signal (NES) signature appears at 64–80 (ICSWNVDGLRAWIKKKG). Residue cysteine 65 is modified to S-nitrosocysteine; alternate. A disulfide bridge connects residues cysteine 65 and cysteine 93. Aspartate 70 lines the Mg(2+) pocket. Cysteine 93 is subject to S-nitrosocysteine; alternate. A Mg(2+)-binding site is contributed by glutamate 96. The active site involves tyrosine 171. Lysine 197 is subject to N6-acetyllysine. Residues aspartate 210 and asparagine 212 each contribute to the Mg(2+) site. The active-site Proton donor/acceptor is aspartate 210. Threonine 233 carries the post-translational modification Phosphothreonine; by CDK5. The interval 289 to 318 (HSLLPALCDSKIRSKALGSDHCPITLYLAL) is mitochondrial targeting sequence (MTS). A Mg(2+)-binding site is contributed by aspartate 308. Cysteine 310 is modified (S-nitrosocysteine).

This sequence belongs to the DNA repair enzymes AP/ExoA family. In terms of assembly, monomer. Homodimer; disulfide-linked. Component of the SET complex, composed of at least APEX1, SET, ANP32A, HMGB2, NME1 and TREX1. Associates with the dimer XRCC5/XRCC6 in a DNA-dependent manner. Interacts with SIRT1; the interaction is increased in the context of genotoxic stress. Interacts with HDAC1, HDAC2 and HDAC3; the interactions are not dependent on the APEX1 acetylation status. Interacts with XRCC1; the interaction is induced by SIRT1 and increased with the APEX1 acetylated form. Interacts with NPM1 (via N-terminal domain); the interaction is RNA-dependent and decreases in hydrogen peroxide-damaged cells. Interacts (via N-terminus) with YBX1 (via C-terminus); the interaction is increased in presence of APEX1 acetylated at Lys-6 and Lys-7. Interacts with HNRNPL; the interaction is DNA-dependent. Interacts (via N-terminus) with KPNA1 and KPNA2. Interacts with TXN; the interaction stimulates the FOS/JUN AP-1 complex DNA-binding activity in a redox-dependent manner. Interacts with GZMA, KRT8, MDM2, POLB, PRDX6, PRPF19, RPLP0, TOMM20 and WDR77. Binds to CDK5. It depends on Mg(2+) as a cofactor. The cofactor is Mn(2+). In terms of processing, phosphorylated. Phosphorylation by kinase PKC or casein kinase CK2 results in enhanced redox activity that stimulates binding of the FOS/JUN AP-1 complex to its cognate binding site. AP-endodeoxyribonuclease activity is not affected by CK2-mediated phosphorylation. Phosphorylation of Thr-233 by CDK5 in response to MPP(+)/MPTP (1-methyl-4-phenylpyridinium) reduces AP-endodeoxyribonuclease activity resulting in accumulation of DNA damage and contributing to neuronal death. Post-translationally, acetylated on Lys-6 and Lys-7. Acetylation is increased by the transcriptional coactivator EP300 acetyltransferase, genotoxic agents like H(2)O(2) and methyl methanesulfonate (MMS). Acetylation increases its binding affinity to the negative calcium response element (nCaRE) DNA promoter. The acetylated form induces a stronger binding of YBX1 to the Y-box sequence in the MDR1 promoter than the unacetylated form. Deacetylated on lysines. Lys-6 and Lys-7 are deacetylated by SIRT1. Cleaved at Lys-31 by granzyme A to create the mitochondrial form; leading in reduction of binding to DNA, AP endodeoxyribonuclease activity, redox activation of transcription factors and to enhanced cell death. Cleaved by granzyme K; leading to intracellular ROS accumulation and enhanced cell death after oxidative stress. In terms of processing, cys-69 and Cys-93 are nitrosylated in response to nitric oxide (NO) and lead to the exposure of the nuclear export signal (NES). Post-translationally, ubiquitinated by MDM2; leading to translocation to the cytoplasm and proteasomal degradation.

The protein localises to the nucleus. It is found in the nucleolus. The protein resides in the nucleus speckle. Its subcellular location is the endoplasmic reticulum. It localises to the cytoplasm. The protein localises to the mitochondrion. The catalysed reaction is Exonucleolytic cleavage in the 3'- to 5'-direction to yield nucleoside 5'-phosphates.. With respect to regulation, NPM1 stimulates endodeoxyribonuclease activity on double-stranded DNA with AP sites, but inhibits endoribonuclease activity on single-stranded RNA containing AP sites. Its function is as follows. Multifunctional protein that plays a central role in the cellular response to oxidative stress. The two major activities of APEX1 are DNA repair and redox regulation of transcriptional factors. Functions as an apurinic/apyrimidinic (AP) endodeoxyribonuclease in the DNA base excision repair (BER) pathway of DNA lesions induced by oxidative and alkylating agents. Initiates repair of AP sites in DNA by catalyzing hydrolytic incision of the phosphodiester backbone immediately adjacent to the damage, generating a single-strand break with 5'-deoxyribose phosphate and 3'-hydroxyl ends. Also incises at AP sites in the DNA strand of DNA/RNA hybrids, single-stranded DNA regions of R-loop structures, and single-stranded RNA molecules. Has 3'-5' exoribonuclease activity on mismatched deoxyribonucleotides at the 3' termini of nicked or gapped DNA molecules during short-patch BER. Possesses DNA 3' phosphodiesterase activity capable of removing lesions (such as phosphoglycolate) blocking the 3' side of DNA strand breaks. May also play a role in the epigenetic regulation of gene expression by participating in DNA demethylation. Acts as a loading factor for POLB onto non-incised AP sites in DNA and stimulates the 5'-terminal deoxyribose 5'-phosphate (dRp) excision activity of POLB. Plays a role in the protection from granzyme-mediated cellular repair leading to cell death. Also involved in the DNA cleavage step of class switch recombination (CSR). On the other hand, APEX1 also exerts reversible nuclear redox activity to regulate DNA binding affinity and transcriptional activity of transcriptional factors by controlling the redox status of their DNA-binding domain, such as the FOS/JUN AP-1 complex after exposure to IR. Involved in calcium-dependent down-regulation of parathyroid hormone (PTH) expression by binding to negative calcium response elements (nCaREs). Together with HNRNPL or the dimer XRCC5/XRCC6, associates with nCaRE, acting as an activator of transcriptional repression. Stimulates the YBX1-mediated MDR1 promoter activity, when acetylated at Lys-6 and Lys-7, leading to drug resistance. Also acts as an endoribonuclease involved in the control of single-stranded RNA metabolism. Plays a role in regulating MYC mRNA turnover by preferentially cleaving in between UA and CA dinucleotides of the MYC coding region determinant (CRD). In association with NMD1, plays a role in the rRNA quality control process during cell cycle progression. Associates, together with YBX1, on the MDR1 promoter. Together with NPM1, associates with rRNA. Binds DNA and RNA. The protein is DNA repair nuclease/redox regulator APEX1 (APEX1) of Gorilla gorilla gorilla (Western lowland gorilla).